Here is a 182-residue protein sequence, read N- to C-terminus: Protein SYM1 (182 aa).

3 consecutive transmembrane segments (helical) span residues 51 to 70 (TLRP…DKWY), 98 to 118 (LIFA…MEGG), and 135 to 155 (LLAN…LVPV).

Belongs to the peroxisomal membrane protein PXMP2/4 family.

The protein resides in the mitochondrion inner membrane. Its function is as follows. May be involved in cellular response to stress. Required to maintain mitochondrial DNA (mtDNA) integrity and stability. The protein is Protein SYM1 (SYM1) of Eremothecium gossypii (strain ATCC 10895 / CBS 109.51 / FGSC 9923 / NRRL Y-1056) (Yeast).